A 511-amino-acid chain; its full sequence is ADP,ATP carrier protein 4 (511 aa).

Transmembrane regions (helical) follow at residues 34-54, 70-90, 102-122, 157-177, 192-212, 231-251, 296-316, 330-350, 361-381, 390-410, 453-473, and 476-496; these read VSKFLFITLLMFCILFIQNLI, IISFLKFWGVMPSAFLMTAIY, IFYLIISIFLTFFALFAYVIF, FSLFYIIAELWPNVVFALLFW, FYPLFGLLSQTGIYLAGQFLE, FHTLSIQIILTIVLILGIIAI, LIATLLICYGIAINLVEGPWK, AAFIGSYLSYTGVFTILFVVL, FTAAVITPLIVFITGILFFAV, LIIANFILTDPALIAITIGAI, LGKSGSAFLQSLVFIILPSAS, and SISTCLMIIFIITCLTWLWAT.

It belongs to the ADP/ATP translocase tlc family.

It localises to the cell membrane. In terms of biological role, provides the rickettsial cell with host ATP in exchange for rickettsial ADP. This is an obligate exchange system. This energy acquiring activity is an important component of rickettsial parasitism. In Rickettsia conorii (strain ATCC VR-613 / Malish 7), this protein is ADP,ATP carrier protein 4 (tlcD).